The chain runs to 574 residues: Penicillin-binding protein activator LpoA (574 aa).

A signal peptide spans 1-25 (MTILLQRAKFKKRLMPILFPLMLAG). Residue C26 is the site of N-palmitoyl cysteine attachment. A lipid anchor (S-diacylglycerol cysteine) is attached at C26.

Belongs to the LpoA family. As to quaternary structure, interacts with PBP1a.

The protein resides in the cell outer membrane. In terms of biological role, regulator of peptidoglycan synthesis that is essential for the function of penicillin-binding protein 1A (PBP1a). This is Penicillin-binding protein activator LpoA from Mannheimia succiniciproducens (strain KCTC 0769BP / MBEL55E).